The following is a 125-amino-acid chain: uncharacterized protein (125 aa).

A helical transmembrane segment spans residues 96–113 (LFMMSIVSSYVCYITVLL).

Its subcellular location is the membrane. This is an uncharacterized protein from Saccharomyces cerevisiae (strain ATCC 204508 / S288c) (Baker's yeast).